The primary structure comprises 667 residues: Holliday junction recognition protein (667 aa).

Positions 78–126 are disordered; it reads LNGQAPEGDSESSGADTSLEENWPSCSSAMREASGDPRQRQPAVPGNTL. Residues serine 169, serine 185, and serine 195 each carry the phosphoserine modification. Disordered stretches follow at residues 181–201 and 279–317; these read ISAKSSGGPEVSALSSRGQGP and RRRPSRKQGLHKNRTHCPRSKPSQRSARKGPASCSEPGK. The segment covering 279 to 297 has biased composition (basic residues); that stretch reads RRRPSRKQGLHKNRTHCPR. A phosphoserine mark is found at serine 388, serine 424, serine 449, and serine 462. Residues 443 to 530 are disordered; that stretch reads YRSGSKSPGS…NSEPTGKAVW (88 aa). The span at 466-482 shows a compositional bias: basic and acidic residues; it reads GREKTERPGEALEDLRG. A compositionally biased stretch (low complexity) spans 496-515; the sequence is SCPSPEGSPSRSPSHSQLSS. Lysine 554 is covalently cross-linked (Glycyl lysine isopeptide (Lys-Gly) (interchain with G-Cter in SUMO2)). Serine 567 is modified (phosphoserine). Residues 596–617 form a disordered region; the sequence is KRLNPDSPQQSSQKRSISPGCH. Residues 601-611 are compositionally biased toward polar residues; sequence DSPQQSSQKRS. Position 613 is a phosphoserine (serine 613).

In terms of assembly, interacts with CENPA (via CATD domain); the interaction is direct and specific for CENPA since it does not interact with H3.1- or H3.3-containing nucleosomes. Heterotrimer composed of HJURP, CENPA and histone H4, where HJURP interacts with the dimer formed by CENPA and histone H4 and prevents tetramerization of CENPA and H4. Identified in a centromere complex containing histones H2A, H2B and H4, and at least CENPA, CENPB, CENPC, CENPT, CENPN, HJURP, SUPT16H, SSRP1 and RSF1. Interacts with 14-3-3 family members in a phosphorylation-dependent manner. Interacts with MSH5 and NBN.

The protein localises to the nucleus. Its subcellular location is the nucleolus. It is found in the chromosome. It localises to the centromere. Its function is as follows. Centromeric protein that plays a central role in the incorporation and maintenance of histone H3-like variant CENPA at centromeres. Acts as a specific chaperone for CENPA and is required for the incorporation of newly synthesized CENPA molecules into nucleosomes at replicated centromeres. Prevents CENPA-H4 tetramerization and prevents premature DNA binding by the CENPA-H4 tetramer. Directly binds Holliday junctions. The polypeptide is Holliday junction recognition protein (Hjurp) (Mus musculus (Mouse)).